Reading from the N-terminus, the 163-residue chain is Shikimate kinase (163 aa).

Residue 10 to 15 coordinates ATP; sequence GVGKTT. A Mg(2+)-binding site is contributed by Thr14. Substrate is bound by residues Asp28, Arg52, and Gly75. Arg116 serves as a coordination point for ATP. Substrate is bound at residue Arg134. Residue Arg151 coordinates ATP.

This sequence belongs to the shikimate kinase family. In terms of assembly, monomer. Requires Mg(2+) as cofactor.

Its subcellular location is the cytoplasm. The catalysed reaction is shikimate + ATP = 3-phosphoshikimate + ADP + H(+). It participates in metabolic intermediate biosynthesis; chorismate biosynthesis; chorismate from D-erythrose 4-phosphate and phosphoenolpyruvate: step 5/7. In terms of biological role, catalyzes the specific phosphorylation of the 3-hydroxyl group of shikimic acid using ATP as a cosubstrate. In Streptococcus pyogenes serotype M12 (strain MGAS2096), this protein is Shikimate kinase.